The primary structure comprises 423 residues: GTPase ERA-like, chloroplastic (423 aa).

The N-terminal 60 residues, 1–60, are a transit peptide targeting the chloroplast; that stretch reads MELGLALRLVAPPPRLPCRALQPPPMPCFSPCAARRSRIRSSRLERRVGVVVSGGSMASL. In terms of domain architecture, Era-type G spans 124–294; the sequence is RSGYVAVLGK…KEWILSKLPL (171 aa). The G1 stretch occupies residues 132–139; that stretch reads GKPNVGKS. 132 to 139 contributes to the GTP binding site; that stretch reads GKPNVGKS. The tract at residues 158-162 is G2; that stretch reads QTTRH. The interval 179-182 is G3; it reads DTPG. Residues 179-183 and 244-247 each bind GTP; these read DTPGV and NKKD. Residues 244-247 are G4; the sequence is NKKD. Positions 273–275 are G5; sequence ISA. The region spanning 325-402 is the KH type-2 domain; sequence YRQEIPYACQ…YLEIMVKVKE (78 aa).

Belongs to the TRAFAC class TrmE-Era-EngA-EngB-Septin-like GTPase superfamily. Era GTPase family.

The protein resides in the plastid. The protein localises to the chloroplast stroma. It is found in the chloroplast nucleoid. Functionally, nuclear genome-encoded probable GTPase involved in ribosome biogenesis in chloroplasts. Plays a role in 16S rRNA maturation in plastids and may contribute to the assembly of the small (30S) ribosomal subunit. This chain is GTPase ERA-like, chloroplastic, found in Oryza sativa subsp. japonica (Rice).